We begin with the raw amino-acid sequence, 357 residues long: MNESYRCQTSTWVERGSSATMGAVLFGAGLLGNLLALVLLARSGLGSCRPGPLHPPPSVFYVLVCGLTVTDLLGKCLISPMVLAAYAQNQSLKELLPASGNQLCETFAFLMSFFGLASTLQLLAMAVECWLSLGHPFFYQRHVTLRRGVLVAPVVAAFCLAFCALPFAGFGKFVQYCPGTWCFIQMIHKERSFSVIGFSVLYSSLMALLVLATVVCNLGAMYNLYDMHRRQRHYPHRCSRDRAQSGSDYRHGSLHPLEELDHFVLLALMTVLFTMCSLPLIYRAYYGAFKLENKAEGDSEDLQALRFLSVISIVDPWIFIIFRTSVFRMLFHKVFTRPLIYRNWSSHSQQSNVESTL.

Residues 1-20 (MNESYRCQTSTWVERGSSAT) are Extracellular-facing. The N-linked (GlcNAc...) asparagine glycan is linked to asparagine 2. A helical transmembrane segment spans residues 21 to 41 (MGAVLFGAGLLGNLLALVLLA). The Cytoplasmic segment spans residues 42–58 (RSGLGSCRPGPLHPPPS). The helical transmembrane segment at 59–79 (VFYVLVCGLTVTDLLGKCLIS) threads the bilayer. The Extracellular portion of the chain corresponds to 80–106 (PMVLAAYAQNQSLKELLPASGNQLCET). Asparagine 89 is a glycosylation site (N-linked (GlcNAc...) asparagine). Residues cysteine 104 and cysteine 182 are joined by a disulfide bond. Residues 107-127 (FAFLMSFFGLASTLQLLAMAV) form a helical membrane-spanning segment. Topologically, residues 128 to 149 (ECWLSLGHPFFYQRHVTLRRGV) are cytoplasmic. Residues 150–170 (LVAPVVAAFCLAFCALPFAGF) traverse the membrane as a helical segment. Residues 171–194 (GKFVQYCPGTWCFIQMIHKERSFS) are Extracellular-facing. A helical transmembrane segment spans residues 195–215 (VIGFSVLYSSLMALLVLATVV). At 216–261 (CNLGAMYNLYDMHRRQRHYPHRCSRDRAQSGSDYRHGSLHPLEELD) the chain is on the cytoplasmic side. The helical transmembrane segment at 262–282 (HFVLLALMTVLFTMCSLPLIY) threads the bilayer. The Extracellular segment spans residues 283–306 (RAYYGAFKLENKAEGDSEDLQALR). The helical transmembrane segment at 307 to 327 (FLSVISIVDPWIFIIFRTSVF) threads the bilayer. Residues 328–357 (RMLFHKVFTRPLIYRNWSSHSQQSNVESTL) lie on the Cytoplasmic side of the membrane.

This sequence belongs to the G-protein coupled receptor 1 family. Most abundantly expressed in the ileum, followed by lung, stomach and uterus.

It is found in the cell membrane. Receptor for prostaglandin D2 (PGD2). The activity of this receptor is mainly mediated by G(s) proteins that stimulate adenylate cyclase, resulting in an elevation of intracellular cAMP. A mobilization of calcium is also observed, but without formation of inositol 1,4,5-trisphosphate. Involved in PLA2G3-dependent maturation of mast cells. PLA2G3 is secreted by immature mast cells and acts on nearby fibroblasts upstream to PTDGS to synthesize PGD2, which in turn promotes mast cell maturation and degranulation via PTGDR. This chain is Prostaglandin D2 receptor (Ptgdr), found in Mus musculus (Mouse).